The sequence spans 389 residues: Pyruvylated Gal-beta-1,3-epitope synthesis protein 2 (389 aa).

At 1–16 (MTKLWVNFFSQKLLRL) the chain is on the cytoplasmic side. The chain crosses the membrane as a helical span at residues 17–37 (LIPSIIVVFAFAALFAIYSPI). Topologically, residues 38–389 (QLGGINFYKR…WSNSFDLITA (352 aa)) are lumenal.

It localises to the endoplasmic reticulum membrane. It is found in the golgi apparatus membrane. Involved in cell wall biogenesis. Has a role in the addition of Gal-beta1,3 moeities to galactomannans and their subsequent pyruvylation. Has a role in meiosis. This chain is Pyruvylated Gal-beta-1,3-epitope synthesis protein 2 (pvg2), found in Schizosaccharomyces pombe (strain 972 / ATCC 24843) (Fission yeast).